Here is a 353-residue protein sequence, read N- to C-terminus: DNA-repair protein XRCC1 (353 aa).

A compositionally biased stretch (polar residues) spans 1-12; that stretch reads MSQKRNLPSWMS. The interval 1–57 is disordered; it reads MSQKRNLPSWMSSRDPEITPSKSHCKKPKDEGPTEEHNSRNAPSNKSEHAEPSSNTT. A compositionally biased stretch (basic and acidic residues) spans 28–39; the sequence is PKDEGPTEEHNS. Positions 58-146 constitute a BRCT 1 domain; it reads EFSKLMEGVV…KLVDIEQYLM (89 aa). The interval 150–194 is disordered; it reads KPWRKSSSPQDANREKREHLSKKPEKQVEKKTETRGTPSTSSKNR. Basic and acidic residues predominate over residues 161-183; the sequence is ANREKREHLSKKPEKQVEKKTET. The span at 184-194 shows a compositional bias: polar residues; it reads RGTPSTSSKNR. The stretch at 240-260 forms a coiled coil; sequence AAEGVLTCLQDAIDSLEQKQD. One can recognise a BRCT 2 domain in the interval 266 to 347; it reads ELWSFVPRVV…EEEIELAYRN (82 aa).

As to quaternary structure, homodimer. Interacts with polynucleotide kinase (PNK), DNA polymerase-beta (POLB) and DNA ligase III (LIG3). Interacts with ZDP and ROS1. Binds to various forms of double-stranded DNA (e.g. methylated, unmethylated, with single-nucleotide gap flanked by 3'-phosphate or 5'-phosphate ends).

The protein localises to the nucleus. Functionally, corrects defective DNA strand-break repair and sister chromatid exchange following treatment with ionizing radiation and alkylating agents. Involved in DNA demethylation pathway by stimulating cytosine methylation (5-meC) excision, gap tailoring, and DNA ligation. This Arabidopsis thaliana (Mouse-ear cress) protein is DNA-repair protein XRCC1.